The sequence spans 158 residues: Endoribonuclease YbeY (158 aa).

Residues His114, His118, and His124 each coordinate Zn(2+).

This sequence belongs to the endoribonuclease YbeY family. Zn(2+) is required as a cofactor.

Its subcellular location is the cytoplasm. Functionally, single strand-specific metallo-endoribonuclease involved in late-stage 70S ribosome quality control and in maturation of the 3' terminus of the 16S rRNA. The polypeptide is Endoribonuclease YbeY (Legionella pneumophila (strain Paris)).